Consider the following 326-residue polypeptide: N-acetyl-gamma-glutamyl-phosphate reductase (326 aa).

Residue Cys-155 is part of the active site.

The protein belongs to the NAGSA dehydrogenase family. Type 1 subfamily.

It localises to the cytoplasm. The catalysed reaction is N-acetyl-L-glutamate 5-semialdehyde + phosphate + NADP(+) = N-acetyl-L-glutamyl 5-phosphate + NADPH + H(+). It participates in amino-acid biosynthesis; L-arginine biosynthesis; N(2)-acetyl-L-ornithine from L-glutamate: step 3/4. In terms of biological role, catalyzes the NADPH-dependent reduction of N-acetyl-5-glutamyl phosphate to yield N-acetyl-L-glutamate 5-semialdehyde. In Shewanella loihica (strain ATCC BAA-1088 / PV-4), this protein is N-acetyl-gamma-glutamyl-phosphate reductase.